A 355-amino-acid chain; its full sequence is 3-isopropylmalate dehydrogenase (355 aa).

Arg-90, Arg-100, Arg-128, and Asp-222 together coordinate substrate. The Mg(2+) site is built by Asp-222, Asp-246, and Asp-250. NAD(+) is bound at residue 280–292; the sequence is GSAPDIAGKGIAN.

This sequence belongs to the isocitrate and isopropylmalate dehydrogenases family. LeuB type 1 subfamily. Homodimer. Mg(2+) serves as cofactor. The cofactor is Mn(2+).

Its subcellular location is the cytoplasm. The catalysed reaction is (2R,3S)-3-isopropylmalate + NAD(+) = 4-methyl-2-oxopentanoate + CO2 + NADH. Its pathway is amino-acid biosynthesis; L-leucine biosynthesis; L-leucine from 3-methyl-2-oxobutanoate: step 3/4. Its function is as follows. Catalyzes the oxidation of 3-carboxy-2-hydroxy-4-methylpentanoate (3-isopropylmalate) to 3-carboxy-4-methyl-2-oxopentanoate. The product decarboxylates to 4-methyl-2 oxopentanoate. This Burkholderia mallei (strain ATCC 23344) protein is 3-isopropylmalate dehydrogenase.